We begin with the raw amino-acid sequence, 474 residues long: MFDKKLLESSELYDKRYRNFSTLIILPLFILLVGGVIFTFFAHKELTVISTGSIEPTKIVAKIQSTNANPIIENNLKEGEAVKENSLLLKYNGTPEQTQLSELLTQKKQALDKKVQLDLLQRSLTNEKNEFPTADSFGYEKSFENYEAQVKSLEATIQKSNQAVEDQNKSTESQKQAIQNQVATLQQAIQNYSEIENAVSSGGGVSQDNPYLSQYNSYQAQQATLEADLKNQKNPDETAKQAAKSQEESLKSQFLSGLASSKDSLKSQIQSFNVQESSLTGSNAYDNSQSSQILTLKSQALSASNKEMTDLNSTLTDLETKISLQKQDDQYSQVFAEQAGVLHVLPDILGMKKIPIGTPIAEIYPLLKSETQVNLTSYIPSTQISGMKVGQKVRFTVQQNLPQPEILTGIINQIDSAPTAFKEGNAYKVSATTTINAKDLPNIRYGLQGKTVTIIGKKTYFNYFLDKIMGRGNQ.

Over Met1–Ser21 the chain is Cytoplasmic. Residues Thr22–Lys44 traverse the membrane as a helical segment. At Glu45 to Gln474 the chain is on the extracellular side.

It belongs to the membrane fusion protein (MFP) (TC 8.A.1) family.

Its subcellular location is the cell membrane. Involved in the secretion of lactococcin A. This is Lactococcin A secretion protein LcnD (lcnD) from Lactococcus lactis subsp. cremoris (Streptococcus cremoris).